Here is a 349-residue protein sequence, read N- to C-terminus: Histidinol-phosphate aminotransferase (349 aa).

Position 206 is an N6-(pyridoxal phosphate)lysine (Lys-206).

Belongs to the class-II pyridoxal-phosphate-dependent aminotransferase family. Histidinol-phosphate aminotransferase subfamily. As to quaternary structure, homodimer. Pyridoxal 5'-phosphate is required as a cofactor.

The enzyme catalyses L-histidinol phosphate + 2-oxoglutarate = 3-(imidazol-4-yl)-2-oxopropyl phosphate + L-glutamate. The protein operates within amino-acid biosynthesis; L-histidine biosynthesis; L-histidine from 5-phospho-alpha-D-ribose 1-diphosphate: step 7/9. The chain is Histidinol-phosphate aminotransferase from Streptococcus mutans serotype c (strain ATCC 700610 / UA159).